The primary structure comprises 223 residues: Large ribosomal subunit protein bL25 (223 aa).

Positions Glu-198 to Glu-223 are disordered.

The protein belongs to the bacterial ribosomal protein bL25 family. CTC subfamily. Part of the 50S ribosomal subunit; part of the 5S rRNA/L5/L18/L25 subcomplex. Contacts the 5S rRNA. Binds to the 5S rRNA independently of L5 and L18.

Functionally, this is one of the proteins that binds to the 5S RNA in the ribosome where it forms part of the central protuberance. This Thermomicrobium roseum (strain ATCC 27502 / DSM 5159 / P-2) protein is Large ribosomal subunit protein bL25.